Reading from the N-terminus, the 274-residue chain is Syntaxin-12 (274 aa).

Residues 1 to 20 are disordered; the sequence is MSYGPLDMYRNPGPSGPQPR. Serine 2 is modified (N-acetylserine). The Cytoplasmic segment spans residues 2–250; sequence SYGPLDMYRN…AYYQKKSRKK (249 aa). Positions 34 to 80 form a coiled coil; that stretch reads QRISQATAQIKNLMSQLGTKQDSSKLQENLQQFQHSTNQLAKETNEL. Residues 128–150 form a disordered region; that stretch reads EKESIARARAGSRLSAEDRQREE. Phosphoserine occurs at positions 139, 142, 218, and 225. A t-SNARE coiled-coil homology domain is found at 178 to 240; the sequence is LELIKERETA…ERASDQLQRA (63 aa). Residues 251–271 form a helical; Anchor for type IV membrane protein membrane-spanning segment; the sequence is MCILVLVLSVIVTVLVVVIWV. Topologically, residues 272-274 are vesicular; the sequence is ASK.

Belongs to the syntaxin family. Associates with the BLOC-1 complex. Interacts with BLOC1S6. Interacts with NAPA and SNAP23. Identified in a complex containing STX6, STX12, VAMP4 and VTI1A. Interacts with GRIPAP1. Forms a complex with GRIP1, GRIA2 and NSG1; controls the intracellular fate of AMPAR and the endosomal sorting of the GRIA2 subunit toward recycling and membrane targeting. Interacts with NSG1. Interacts with TPC1. Interacts (via N-terminus) with VPS13B. In terms of tissue distribution, ubiquitous. Highly expressed in brain.

Its subcellular location is the endosome membrane. The protein localises to the golgi apparatus membrane. It is found in the endomembrane system. It localises to the early endosome membrane. The protein resides in the recycling endosome membrane. SNARE promoting fusion of transport vesicles with target membranes. Together with SNARE STX6, promotes movement of vesicles from endosomes to the cell membrane, and may therefore function in the endocytic recycling pathway. Through complex formation with GRIP1, GRIA2 and NSG1 controls the intracellular fate of AMPAR and the endosomal sorting of the GRIA2 subunit toward recycling and membrane targeting. The protein is Syntaxin-12 (Stx12) of Rattus norvegicus (Rat).